The primary structure comprises 121 residues: Large ribosomal subunit protein uL14 (121 aa).

This sequence belongs to the universal ribosomal protein uL14 family. As to quaternary structure, part of the 50S ribosomal subunit. Forms a cluster with proteins L3 and L19. In the 70S ribosome, L14 and L19 interact and together make contacts with the 16S rRNA in bridges B5 and B8.

Binds to 23S rRNA. Forms part of two intersubunit bridges in the 70S ribosome. The sequence is that of Large ribosomal subunit protein uL14 from Opitutus terrae (strain DSM 11246 / JCM 15787 / PB90-1).